Reading from the N-terminus, the 846-residue chain is Circadian locomoter output cycles protein kaput (846 aa).

A Nuclear localization signal motif is present at residues 32-47 (DKAKRVSRNKSEKKRR). One can recognise a bHLH domain in the interval 34 to 84 (AKRVSRNKSEKKRRDQFNVLIKELGSMLPGNARKMDKSTVLQKSIDFLRKH). A phosphoserine mark is found at S38 and S42. A Glycyl lysine isopeptide (Lys-Gly) (interchain with G-Cter in SUMO1) cross-link involves residue K67. 2 consecutive PAS domains span residues 107 to 177 (NEEF…LLES) and 262 to 332 (FIKE…MQYG). The PAC domain maps to 336-379 (SCYYRFLTKGQQWIWLQTHYYITYHQWNSRPEFIVCTHTVVSYA). An interaction with NR3C1 region spans residues 371 to 845 (CTHTVVSYAE…SLPDPSKVQP (475 aa)). 2 disordered regions span residues 392 to 411 (EESL…SDNR) and 420 to 495 (ALER…SSLT). S408 carries the post-translational modification Phosphoserine. Residue S427 is modified to Phosphoserine; by GSK3-beta. The residue at position 431 (S431) is a Phosphoserine. The segment covering 447-463 (DPSSTPTKIPTDTSTPP) has biased composition (polar residues). Residues 450 to 570 (STPTKIPTDT…QGLQMFLQQS (121 aa)) form an interaction with SIRT1 region. T451 and T461 each carry phosphothreonine; by CDK5. Residues 478-493 (SSFSSQSINSQSVGSS) are compositionally biased toward low complexity. The interval 514-564 (FQFSAQLGAMQHLKDQLEQRTRMIEANIHRQQEELRKIQEQLQMVHGQGLQ) is implicated in the circadian rhythmicity. Low complexity-rich tracts occupy residues 624 to 637 (QQQT…QSQQ) and 644 to 654 (SQQTSLPSQTQ). Disordered regions lie at residues 624–654 (QQQT…SQTQ), 764–783 (EQQL…QPPQ), and 811–846 (STFP…VQPQ). Over residues 811-829 (STFPQSHHQQHQSQQQQQL) the composition is skewed to low complexity. K842 participates in a covalent cross-link: Glycyl lysine isopeptide (Lys-Gly) (interchain with G-Cter in SUMO1).

Component of the circadian clock oscillator which includes the CRY proteins, CLOCK or NPAS2, BMAL1 or BMAL2, CSNK1D and/or CSNK1E, TIMELESS and the PER proteins. Interacts with KMT2A; in a circadian manner. Forms a heterodimer with BMAL1. The CLOCK-BMAL1 heterodimer is required for E-box-dependent transactivation, for CLOCK nuclear translocation and degradation, and for phosphorylation of both CLOCK and BMAL1. Interacts with NR3C1 in a ligand-dependent fashion. Interacts with ESR1 and estrogen stimulates this interaction. Interacts with the complex p35/CDK5. Interacts with RELA/p65. Interacts with KAT2B, CREBBP, EP300. Interacts with ID1 and ID3. Interacts with ID2. Interacts with MTA1. Interacts with OGA. Interacts with SIRT1. Interacts with CIPC. Interacts with EZH2. Interacts with EIF4E, PIWIL1 and DDX4. Interacts with PER2 and CRY1 and the interaction with PER and CRY proteins requires translocation to the nucleus. Interacts with PER1 and CRY2. Interaction of the CLOCK-BMAL1 heterodimer with PER or CRY inhibits transcription activation. Interaction of the CLOCK-BMAL1 with CRY1 is independent of DNA but with PER2 is off DNA. The CLOCK-BMAL1 heterodimer interacts with GSK3B. Interacts with KDM5A. Interacts with MYBBP1A. Interacts with THRAP3. Interacts with MED1; this interaction requires the presence of THRAP3. Interacts with NCOA2. The CLOCK-BMAL1 heterodimer interacts with PASD1. Interacts with ASS1 and IMPDH2; in a circadian manner. Interacts with NDUFA9. Interacts with PIWIL2 (via PIWI domain). Interacts with HNF4A. In terms of processing, ubiquitinated, leading to its proteasomal degradation. Post-translationally, O-glycosylated; contains O-GlcNAc. O-glycosylation by OGT prevents protein degradation by inhibiting ubiquitination. It also stabilizes the CLOCK-BMAL1 heterodimer thereby increasing CLOCK-BMAL1-mediated transcriptional activation of PER1/2/3 and CRY1/2. Phosphorylation is dependent on the CLOCK-BMAL1 heterodimer formation. Phosphorylation enhances the transcriptional activity, alters the subcellular localization and decreases the stability of the heterodimer by promoting its degradation. Phosphorylation shows circadian variations in the liver. May be phosphorylated by CSNK1D and CKSN1E. In terms of processing, sumoylation enhances its transcriptional activity and interaction with ESR1, resulting in up-regulation of ESR1 activity. Estrogen stimulates sumoylation. Desumoylation by SENP1 negatively regulates its transcriptional activity. Sumoylation stimulates cell proliferation and increases the proportion of S phase cells in breast cancer cell lines. Post-translationally, undergoes lysosome-mediated degradation in a time-dependent manner in the liver. Hair follicles (at protein level). Expressed in all tissues examined including spleen, thymus, prostate, testis, ovary, small intestine, colon, leukocytes, heart, brain, placenta, lung, liver, skeletal muscle, kidney and pancreas. Highest levels in testis and skeletal muscle. Low levels in thymus, lung and liver. Expressed in all brain regions with highest levels in cerebellum. Highly expressed in the suprachiasmatic nucleus (SCN).

The protein localises to the nucleus. It is found in the cytoplasm. Its subcellular location is the cytosol. The catalysed reaction is L-lysyl-[protein] + acetyl-CoA = N(6)-acetyl-L-lysyl-[protein] + CoA + H(+). There is conflicting data about the effect of NAD cofactors on activity. PubMed:11441146 suggests that the redox state of the cell can modulate the transcriptional activity of the CLOCK-BMAL1 heterodimer; NADH and NADPH enhance the DNA-binding activity of the heterodimer. PubMed:23229515 reports that NADH and NADPH have no significant effect on DNA-binding activity of the CLOCK-BMAL1 heterodimer. Functionally, transcriptional activator which forms a core component of the circadian clock. The circadian clock, an internal time-keeping system, regulates various physiological processes through the generation of approximately 24 hour circadian rhythms in gene expression, which are translated into rhythms in metabolism and behavior. It is derived from the Latin roots 'circa' (about) and 'diem' (day) and acts as an important regulator of a wide array of physiological functions including metabolism, sleep, body temperature, blood pressure, endocrine, immune, cardiovascular, and renal function. Consists of two major components: the central clock, residing in the suprachiasmatic nucleus (SCN) of the brain, and the peripheral clocks that are present in nearly every tissue and organ system. Both the central and peripheral clocks can be reset by environmental cues, also known as Zeitgebers (German for 'timegivers'). The predominant Zeitgeber for the central clock is light, which is sensed by retina and signals directly to the SCN. The central clock entrains the peripheral clocks through neuronal and hormonal signals, body temperature and feeding-related cues, aligning all clocks with the external light/dark cycle. Circadian rhythms allow an organism to achieve temporal homeostasis with its environment at the molecular level by regulating gene expression to create a peak of protein expression once every 24 hours to control when a particular physiological process is most active with respect to the solar day. Transcription and translation of core clock components (CLOCK, NPAS2, BMAL1, BMAL2, PER1, PER2, PER3, CRY1 and CRY2) plays a critical role in rhythm generation, whereas delays imposed by post-translational modifications (PTMs) are important for determining the period (tau) of the rhythms (tau refers to the period of a rhythm and is the length, in time, of one complete cycle). A diurnal rhythm is synchronized with the day/night cycle, while the ultradian and infradian rhythms have a period shorter and longer than 24 hours, respectively. Disruptions in the circadian rhythms contribute to the pathology of cardiovascular diseases, cancer, metabolic syndromes and aging. A transcription/translation feedback loop (TTFL) forms the core of the molecular circadian clock mechanism. Transcription factors, CLOCK or NPAS2 and BMAL1 or BMAL2, form the positive limb of the feedback loop, act in the form of a heterodimer and activate the transcription of core clock genes and clock-controlled genes (involved in key metabolic processes), harboring E-box elements (5'-CACGTG-3') within their promoters. The core clock genes: PER1/2/3 and CRY1/2 which are transcriptional repressors form the negative limb of the feedback loop and interact with the CLOCK|NPAS2-BMAL1|BMAL2 heterodimer inhibiting its activity and thereby negatively regulating their own expression. This heterodimer also activates nuclear receptors NR1D1/2 and RORA/B/G, which form a second feedback loop and which activate and repress BMAL1 transcription, respectively. Regulates the circadian expression of ICAM1, VCAM1, CCL2, THPO and MPL and also acts as an enhancer of the transactivation potential of NF-kappaB. Plays an important role in the homeostatic regulation of sleep. The CLOCK-BMAL1 heterodimer regulates the circadian expression of SERPINE1/PAI1, VWF, B3, CCRN4L/NOC, NAMPT, DBP, MYOD1, PPARGC1A, PPARGC1B, SIRT1, GYS2, F7, NGFR, GNRHR, BHLHE40/DEC1, ATF4, MTA1, KLF10 and also genes implicated in glucose and lipid metabolism. Promotes rhythmic chromatin opening, regulating the DNA accessibility of other transcription factors. The CLOCK-BMAL2 heterodimer activates the transcription of SERPINE1/PAI1 and BHLHE40/DEC1. The preferred binding motif for the CLOCK-BMAL1 heterodimer is 5'-CACGTGA-3', which contains a flanking adenine nucleotide at the 3-prime end of the canonical 6-nucleotide E-box sequence. CLOCK specifically binds to the half-site 5'-CAC-3', while BMAL1 binds to the half-site 5'-GTGA-3'. The CLOCK-BMAL1 heterodimer also recognizes the non-canonical E-box motifs 5'-AACGTGA-3' and 5'-CATGTGA-3'. CLOCK has an intrinsic acetyltransferase activity, which enables circadian chromatin remodeling by acetylating histones and nonhistone proteins, including its own partner BMAL1. Represses glucocorticoid receptor NR3C1/GR-induced transcriptional activity by reducing the association of NR3C1/GR to glucocorticoid response elements (GREs) via the acetylation of multiple lysine residues located in its hinge region. The acetyltransferase activity of CLOCK is as important as its transcription activity in circadian control. Acetylates metabolic enzymes IMPDH2 and NDUFA9 in a circadian manner. Facilitated by BMAL1, rhythmically interacts and acetylates argininosuccinate synthase 1 (ASS1) leading to enzymatic inhibition of ASS1 as well as the circadian oscillation of arginine biosynthesis and subsequent ureagenesis. Drives the circadian rhythm of blood pressure through transcriptional activation of ATP1B1. The protein is Circadian locomoter output cycles protein kaput (CLOCK) of Homo sapiens (Human).